The primary structure comprises 400 residues: MGFVKILSLSLAATAVADAATILSPRYPNDVIPNEYIVVMKDGVSSASFASHSAWVADMHYYNHTKRALPGHGIQEVYDIYEMKAYSGKFDEDTIQRIAKEPDVAFIEPNQIVTISEISVQKAAPSWGLPRISVKENQLSSNTDYFYDSSAGAGIWVYVVDTGVDIKHPDFEGRAVWGTSTVDRSKTDRLGHGTHVAGTIASKTYGVAKAVKIIAVKVFKDRTTSYKNIIGGIDWAVKHSKKNNMLSKSVVNMSLGGGRSSAMNKAAANAHKTGMFVAVSAGNTPVDAMNFSPASEPLACTVAASDKDDMQAQFSAFGPAVDIFAPGTDIVSLVPRKKFGTKSGTSMAAAHVSGAGAYIMALEKIPGNEVCNRLKELAQSSIVRSSDKTTRKLLYNNSGK.

The signal sequence occupies residues 1-19; the sequence is MGFVKILSLSLAATAVADA. Residues 20-116 constitute a propeptide that is removed on maturation; that stretch reads ATILSPRYPN…IEPNQIVTIS (97 aa). One can recognise an Inhibitor I9 domain in the interval 36–115; sequence YIVVMKDGVS…FIEPNQIVTI (80 aa). The Peptidase S8 domain maps to 126-400; the sequence is SWGLPRISVK…RKLLYNNSGK (275 aa). Residues Asp161 and His192 each act as charge relay system in the active site. The N-linked (GlcNAc...) asparagine glycan is linked to Asn252. Ser346 functions as the Charge relay system in the catalytic mechanism. A glycan (N-linked (GlcNAc...) asparagine) is linked at Asn396.

The protein belongs to the peptidase S8 family.

The protein resides in the secreted. Functionally, secreted subtilisin-like serine protease with keratinolytic activity that contributes to pathogenicity. This Coccidioides posadasii (strain C735) (Valley fever fungus) protein is Subtilisin-like protease CPC735_013700.